Here is a 276-residue protein sequence, read N- to C-terminus: ESX-2 secretion-associated protein EspG2 (276 aa).

It belongs to the EspG family. Interacts specifically with ESX-2-dependent PE/PPE proteins.

The protein localises to the cytoplasm. In terms of biological role, specific chaperone for cognate PE/PPE proteins. Plays an important role in preventing aggregation of PE/PPE dimers. This is ESX-2 secretion-associated protein EspG2 from Mycobacterium tuberculosis (strain CDC 1551 / Oshkosh).